The primary structure comprises 599 residues: Sulfite reductase [NADPH] flavoprotein alpha-component (599 aa).

The 139-residue stretch at 64 to 202 (VTLISASQTG…AASEWRARVV (139 aa)) folds into the Flavodoxin-like domain. FMN contacts are provided by residues 70–75 (SQTGNA), 117–120 (STQG), and 153–162 (LGDTSYEFFC). The region spanning 234–448 (DAPLTATLSV…IEHNDNFRLP (215 aa)) is the FAD-binding FR-type domain. Residues T322, A356, 386–389 (RLYS), 404–406 (TVG), Y410, and 419–422 (GGAS) contribute to the FAD site. NADP(+) contacts are provided by residues 519 to 520 (SR), 525 to 529 (KIYVQ), and D561. Y599 is a binding site for FAD.

It belongs to the NADPH-dependent sulphite reductase flavoprotein subunit CysJ family. This sequence in the N-terminal section; belongs to the flavodoxin family. The protein in the C-terminal section; belongs to the flavoprotein pyridine nucleotide cytochrome reductase family. Alpha(8)-beta(8). The alpha component is a flavoprotein, the beta component is a hemoprotein. It depends on FAD as a cofactor. Requires FMN as cofactor.

The catalysed reaction is hydrogen sulfide + 3 NADP(+) + 3 H2O = sulfite + 3 NADPH + 4 H(+). It participates in sulfur metabolism; hydrogen sulfide biosynthesis; hydrogen sulfide from sulfite (NADPH route): step 1/1. Its function is as follows. Component of the sulfite reductase complex that catalyzes the 6-electron reduction of sulfite to sulfide. This is one of several activities required for the biosynthesis of L-cysteine from sulfate. The flavoprotein component catalyzes the electron flow from NADPH -&gt; FAD -&gt; FMN to the hemoprotein component. The sequence is that of Sulfite reductase [NADPH] flavoprotein alpha-component from Salmonella paratyphi A (strain ATCC 9150 / SARB42).